We begin with the raw amino-acid sequence, 258 residues long: Axonemal dynein light intermediate polypeptide 1 (258 aa).

2 disordered regions span residues 1–60 (MIPP…CVPD) and 202–231 (DLER…EEKK). The stretch at 176–255 (MRKALQAEQG…LKAQLEGIIA (80 aa)) forms a coiled coil.

The protein belongs to the inner dynein arm light chain family. Interacts with CFAP45. Interacts with DYNC1H1.

It localises to the cell projection. The protein resides in the cilium. The protein localises to the flagellum. Its subcellular location is the dynein axonemal particle. It is found in the cytoplasm. Involved in sperm flagellum assembly. The protein is Axonemal dynein light intermediate polypeptide 1 of Rattus norvegicus (Rat).